Consider the following 462-residue polypeptide: ATP synthase subunit beta (462 aa).

151–158 lines the ATP pocket; it reads GGAGVGKT.

The protein belongs to the ATPase alpha/beta chains family. F-type ATPases have 2 components, CF(1) - the catalytic core - and CF(0) - the membrane proton channel. CF(1) has five subunits: alpha(3), beta(3), gamma(1), delta(1), epsilon(1). CF(0) has three main subunits: a(1), b(2) and c(9-12). The alpha and beta chains form an alternating ring which encloses part of the gamma chain. CF(1) is attached to CF(0) by a central stalk formed by the gamma and epsilon chains, while a peripheral stalk is formed by the delta and b chains.

The protein localises to the cell inner membrane. It catalyses the reaction ATP + H2O + 4 H(+)(in) = ADP + phosphate + 5 H(+)(out). Produces ATP from ADP in the presence of a proton gradient across the membrane. The catalytic sites are hosted primarily by the beta subunits. This chain is ATP synthase subunit beta, found in Chlorobaculum parvum (strain DSM 263 / NCIMB 8327) (Chlorobium vibrioforme subsp. thiosulfatophilum).